A 364-amino-acid chain; its full sequence is Protein FAM81A (364 aa).

3 coiled-coil regions span residues 75 to 107, 158 to 189, and 261 to 287; these read FLEE…RDNI, NKEQ…VDLS, and ANER…QKRN. A disordered region spans residues 281–300; it reads EESQKRNAEGQRKPDEEKVH.

The protein belongs to the FAM81 family. Interacts with DLG4/PSD-95, GRIN2B/GLUN2B and SYNGAP1; the interactions facilitate condensate formation. Expressed in most regions of the brain (at protein level).

It is found in the postsynaptic density. It localises to the cytoplasm. Facilitates the interaction and assembly of proteins within the postsynaptic density by promoting the condensation of postsynaptic proteins via liquid-liquid phase separation. Required for neuronal activity. Accumulation at the postsynaptic density results in enlargement of dendritic spines. In Mus musculus (Mouse), this protein is Protein FAM81A (Fam81a).